A 61-amino-acid polypeptide reads, in one-letter code: Small ribosomal subunit protein uS14 (61 aa).

Zn(2+) contacts are provided by Cys-24, Cys-27, Cys-40, and Cys-43.

This sequence belongs to the universal ribosomal protein uS14 family. Zinc-binding uS14 subfamily. As to quaternary structure, part of the 30S ribosomal subunit. Contacts proteins S3 and S10. The cofactor is Zn(2+).

In terms of biological role, binds 16S rRNA, required for the assembly of 30S particles and may also be responsible for determining the conformation of the 16S rRNA at the A site. This chain is Small ribosomal subunit protein uS14, found in Trichlorobacter lovleyi (strain ATCC BAA-1151 / DSM 17278 / SZ) (Geobacter lovleyi).